We begin with the raw amino-acid sequence, 338 residues long: Tetraacyldisaccharide 4'-kinase (338 aa).

An ATP-binding site is contributed by 51 to 58; sequence HLGGAGKT.

The protein belongs to the LpxK family.

It catalyses the reaction a lipid A disaccharide + ATP = a lipid IVA + ADP + H(+). It participates in glycolipid biosynthesis; lipid IV(A) biosynthesis; lipid IV(A) from (3R)-3-hydroxytetradecanoyl-[acyl-carrier-protein] and UDP-N-acetyl-alpha-D-glucosamine: step 6/6. In terms of biological role, transfers the gamma-phosphate of ATP to the 4'-position of a tetraacyldisaccharide 1-phosphate intermediate (termed DS-1-P) to form tetraacyldisaccharide 1,4'-bis-phosphate (lipid IVA). The sequence is that of Tetraacyldisaccharide 4'-kinase from Rhodopseudomonas palustris (strain HaA2).